The sequence spans 220 residues: Peptide methionine sulfoxide reductase MsrA (220 aa).

C59 is a catalytic residue.

The protein belongs to the MsrA Met sulfoxide reductase family.

The catalysed reaction is L-methionyl-[protein] + [thioredoxin]-disulfide + H2O = L-methionyl-(S)-S-oxide-[protein] + [thioredoxin]-dithiol. It catalyses the reaction [thioredoxin]-disulfide + L-methionine + H2O = L-methionine (S)-S-oxide + [thioredoxin]-dithiol. Has an important function as a repair enzyme for proteins that have been inactivated by oxidation. Catalyzes the reversible oxidation-reduction of methionine sulfoxide in proteins to methionine. The chain is Peptide methionine sulfoxide reductase MsrA from Corynebacterium kroppenstedtii (strain DSM 44385 / JCM 11950 / CIP 105744 / CCUG 35717).